The chain runs to 93 residues: Protamine-3 (93 aa).

Positions 1–93 (MGSRCAKLGT…QSPEPKQTRS (93 aa)) are disordered. A compositionally biased stretch (acidic residues) spans 37 to 57 (EGEEEEEGEEEEEEEGEEEEL). Residues 81 to 93 (EVQQSPEPKQTRS) are compositionally biased toward polar residues. Phosphoserine is present on Ser-85.

It belongs to the protamine P3 family.

The protein resides in the nucleus. The protein localises to the chromosome. Protamines substitute for histones in the chromatin of sperm during the haploid phase of spermatogenesis. They compact sperm DNA into a highly condensed, stable and inactive complex. The protein is Protamine-3 (PRM3) of Bos taurus (Bovine).